A 337-amino-acid polypeptide reads, in one-letter code: Biotin synthase (337 aa).

Residues 58–283 enclose the Radical SAM core domain; it reads PEVEVEGIIS…RTILRFAGGR (226 aa). [4Fe-4S] cluster-binding residues include Cys-73, Cys-77, and Cys-80. Residues Cys-116, Cys-149, Cys-208, and Arg-278 each coordinate [2Fe-2S] cluster.

Belongs to the radical SAM superfamily. Biotin synthase family. Homodimer. Requires [4Fe-4S] cluster as cofactor. [2Fe-2S] cluster is required as a cofactor.

The enzyme catalyses (4R,5S)-dethiobiotin + (sulfur carrier)-SH + 2 reduced [2Fe-2S]-[ferredoxin] + 2 S-adenosyl-L-methionine = (sulfur carrier)-H + biotin + 2 5'-deoxyadenosine + 2 L-methionine + 2 oxidized [2Fe-2S]-[ferredoxin]. The protein operates within cofactor biosynthesis; biotin biosynthesis; biotin from 7,8-diaminononanoate: step 2/2. In terms of biological role, catalyzes the conversion of dethiobiotin (DTB) to biotin by the insertion of a sulfur atom into dethiobiotin via a radical-based mechanism. In Rhodococcus jostii (strain RHA1), this protein is Biotin synthase.